Consider the following 20-residue polypeptide: Cruzioseptin-15 (20 aa).

Expressed by the skin glands.

It localises to the secreted. Functionally, has antimicrobial activity. In Cruziohyla calcarifer (Splendid leaf frog), this protein is Cruzioseptin-15.